The following is a 338-amino-acid chain: N-acetyl-gamma-glutamyl-phosphate reductase (338 aa).

The active site involves C148.

This sequence belongs to the NAGSA dehydrogenase family. Type 1 subfamily.

The protein resides in the cytoplasm. It carries out the reaction N-acetyl-L-glutamate 5-semialdehyde + phosphate + NADP(+) = N-acetyl-L-glutamyl 5-phosphate + NADPH + H(+). Its pathway is amino-acid biosynthesis; L-arginine biosynthesis; N(2)-acetyl-L-ornithine from L-glutamate: step 3/4. In terms of biological role, catalyzes the NADPH-dependent reduction of N-acetyl-5-glutamyl phosphate to yield N-acetyl-L-glutamate 5-semialdehyde. In Leptospira interrogans serogroup Icterohaemorrhagiae serovar copenhageni (strain Fiocruz L1-130), this protein is N-acetyl-gamma-glutamyl-phosphate reductase.